The primary structure comprises 367 residues: Heme A synthase (367 aa).

8 helical membrane-spanning segments follow: residues Ala-25–Gly-45, Leu-111–Gly-131, Trp-139–Val-159, Leu-174–Gly-194, Gly-210–Ala-230, Phe-272–Ala-292, Ala-305–Met-325, and Val-327–Val-347. His-274 is a binding site for heme. Heme is bound at residue His-335.

The protein belongs to the COX15/CtaA family. Type 2 subfamily. In terms of assembly, interacts with CtaB. Heme b is required as a cofactor.

It is found in the cell membrane. The catalysed reaction is Fe(II)-heme o + 2 A + H2O = Fe(II)-heme a + 2 AH2. The protein operates within porphyrin-containing compound metabolism; heme A biosynthesis; heme A from heme O: step 1/1. Functionally, catalyzes the conversion of heme O to heme A by two successive hydroxylations of the methyl group at C8. The first hydroxylation forms heme I, the second hydroxylation results in an unstable dihydroxymethyl group, which spontaneously dehydrates, resulting in the formyl group of heme A. In Rhizobium etli (strain ATCC 51251 / DSM 11541 / JCM 21823 / NBRC 15573 / CFN 42), this protein is Heme A synthase.